The sequence spans 318 residues: COP9 signalosome complex subunit 6 (318 aa).

An MPN domain is found at 32 to 165 (VALHPLVILN…VSVYESVIDI (134 aa)).

Belongs to the peptidase M67A family. CSN6 subfamily. As to quaternary structure, component of the CSN complex, probably composed of cops1, cops2, cops3, cops4, cops5, cops6, cops7, cops8 and cops9.

It localises to the cytoplasm. The protein resides in the nucleus. Component of the COP9 signalosome complex (CSN), a complex involved in various cellular and developmental processes. The CSN complex is an essential regulator of the ubiquitin (Ubl) conjugation pathway by mediating the deneddylation of the cullin subunits of E3 ligase complexes, leading to modify the Ubl ligase activity. The sequence is that of COP9 signalosome complex subunit 6 (cops6) from Xenopus laevis (African clawed frog).